The sequence spans 288 residues: Thymidylate synthase (288 aa).

Arg-21 provides a ligand contact to dUMP. Asn-51 provides a ligand contact to (6R)-5,10-methylene-5,6,7,8-tetrahydrofolate. 150-151 contributes to the dUMP binding site; that stretch reads RR. The active-site Nucleophile is the Cys-170. DUMP is bound by residues 190-193, Asn-201, and 231-233; these read RSGD and HIY. A (6R)-5,10-methylene-5,6,7,8-tetrahydrofolate-binding site is contributed by Asp-193. A (6R)-5,10-methylene-5,6,7,8-tetrahydrofolate-binding site is contributed by Ala-287.

It belongs to the thymidylate synthase family. Bacterial-type ThyA subfamily. Homodimer.

Its subcellular location is the cytoplasm. It catalyses the reaction dUMP + (6R)-5,10-methylene-5,6,7,8-tetrahydrofolate = 7,8-dihydrofolate + dTMP. It functions in the pathway pyrimidine metabolism; dTTP biosynthesis. Its function is as follows. Catalyzes the reductive methylation of 2'-deoxyuridine-5'-monophosphate (dUMP) to 2'-deoxythymidine-5'-monophosphate (dTMP) while utilizing 5,10-methylenetetrahydrofolate (mTHF) as the methyl donor and reductant in the reaction, yielding dihydrofolate (DHF) as a by-product. This enzymatic reaction provides an intracellular de novo source of dTMP, an essential precursor for DNA biosynthesis. This Phytoplasma mali (strain AT) protein is Thymidylate synthase.